We begin with the raw amino-acid sequence, 198 residues long: Nucleoid occlusion factor SlmA (198 aa).

The region spanning 9–70 is the HTH tetR-type domain; the sequence is RNRREEILQA…SLIEFIEDSL (62 aa). Residues 33 to 52 constitute a DNA-binding region (H-T-H motif); sequence TTAKLAANVGVSEAALYRHF. Residues 117–144 are a coiled coil; it reads EQDRLQGRINQLFERIEAQLRQVLKERK.

The protein belongs to the nucleoid occlusion factor SlmA family. In terms of assembly, homodimer. Interacts with FtsZ.

The protein resides in the cytoplasm. Its subcellular location is the nucleoid. Its function is as follows. Required for nucleoid occlusion (NO) phenomenon, which prevents Z-ring formation and cell division over the nucleoid. Acts as a DNA-associated cell division inhibitor that binds simultaneously chromosomal DNA and FtsZ, and disrupts the assembly of FtsZ polymers. SlmA-DNA-binding sequences (SBS) are dispersed on non-Ter regions of the chromosome, preventing FtsZ polymerization at these regions. The sequence is that of Nucleoid occlusion factor SlmA from Serratia proteamaculans (strain 568).